The sequence spans 297 residues: Phosphoribosylaminoimidazole-succinocarboxamide synthase (297 aa).

This sequence belongs to the SAICAR synthetase family.

It catalyses the reaction 5-amino-1-(5-phospho-D-ribosyl)imidazole-4-carboxylate + L-aspartate + ATP = (2S)-2-[5-amino-1-(5-phospho-beta-D-ribosyl)imidazole-4-carboxamido]succinate + ADP + phosphate + 2 H(+). Its pathway is purine metabolism; IMP biosynthesis via de novo pathway; 5-amino-1-(5-phospho-D-ribosyl)imidazole-4-carboxamide from 5-amino-1-(5-phospho-D-ribosyl)imidazole-4-carboxylate: step 1/2. The polypeptide is Phosphoribosylaminoimidazole-succinocarboxamide synthase (Mycobacteroides abscessus (strain ATCC 19977 / DSM 44196 / CCUG 20993 / CIP 104536 / JCM 13569 / NCTC 13031 / TMC 1543 / L948) (Mycobacterium abscessus)).